We begin with the raw amino-acid sequence, 348 residues long: Heat-inducible transcription repressor HrcA (348 aa).

This sequence belongs to the HrcA family.

Functionally, negative regulator of class I heat shock genes (grpE-dnaK-dnaJ and groELS operons). Prevents heat-shock induction of these operons. This Ruminiclostridium cellulolyticum (strain ATCC 35319 / DSM 5812 / JCM 6584 / H10) (Clostridium cellulolyticum) protein is Heat-inducible transcription repressor HrcA.